Here is a 374-residue protein sequence, read N- to C-terminus: F-box/LRR-repeat protein 8 (374 aa).

An F-box domain is found at 2-48 (AEPGEGLPEEVLALIFRHLSLRDRAAAARVCRAWAAAATCSAVWHDT).

Directly interacts with SKP1 and CUL1.

Its function is as follows. Substrate-recognition component of the SCF (SKP1-CUL1-F-box protein)-type E3 ubiquitin ligase complex. The chain is F-box/LRR-repeat protein 8 (FBXL8) from Homo sapiens (Human).